Reading from the N-terminus, the 236-residue chain is Diaminopimelate epimerase (236 aa).

Substrate-binding residues include Asn-8 and Asn-55. The active-site Proton donor is the Cys-64. Substrate is bound by residues 65-66 (GN), Asn-159, and 176-177 (ER). Cys-186 functions as the Proton acceptor in the catalytic mechanism. 187–188 (GT) contacts substrate.

Belongs to the diaminopimelate epimerase family. Probably forms homotrimers.

The protein resides in the cytoplasm. The catalysed reaction is (2S,6S)-2,6-diaminopimelate = meso-2,6-diaminopimelate. The protein operates within amino-acid biosynthesis; L-lysine biosynthesis via DAP pathway; DL-2,6-diaminopimelate from LL-2,6-diaminopimelate: step 1/1. Its function is as follows. Catalyzes the stereoinversion of LL-2,6-diaminopimelate (L,L-DAP) to meso-diaminopimelate (meso-DAP), a precursor of L-lysine and an essential component of the bacterial peptidoglycan. Also catalyzes the racemization of certain amino acids, including Lys, with low efficiency. This is Diaminopimelate epimerase from Thermotoga maritima (strain ATCC 43589 / DSM 3109 / JCM 10099 / NBRC 100826 / MSB8).